We begin with the raw amino-acid sequence, 233 residues long: tRNA (guanine-N(1)-)-methyltransferase (233 aa).

S-adenosyl-L-methionine contacts are provided by residues glycine 121 and 140 to 145 (IGDYIL).

This sequence belongs to the RNA methyltransferase TrmD family. As to quaternary structure, homodimer.

The protein resides in the cytoplasm. The catalysed reaction is guanosine(37) in tRNA + S-adenosyl-L-methionine = N(1)-methylguanosine(37) in tRNA + S-adenosyl-L-homocysteine + H(+). Functionally, specifically methylates guanosine-37 in various tRNAs. The protein is tRNA (guanine-N(1)-)-methyltransferase of Endomicrobium trichonymphae.